The primary structure comprises 137 residues: Structural protein A137R (137 aa).

This sequence belongs to the asfivirus A137R family. In terms of assembly, interacts with host TBK1.

Its subcellular location is the virion. The protein resides in the host cytoplasm. Plays a role in the inhibition of the host innate immune response. Mechanistically, promotes the autophagy-mediated lysosomal degradation of host TBK1 and affects IRF3 nuclear translocation to block type I IFN production. The sequence is that of Structural protein A137R from African swine fever virus (isolate Warthog/Namibia/Wart80/1980) (ASFV).